The primary structure comprises 305 residues: Acetyl-coenzyme A carboxylase carboxyl transferase subunit beta (305 aa).

In terms of domain architecture, CoA carboxyltransferase N-terminal spans 27–296 (LWVKCSACRE…PAAKADLAAR (270 aa)). Zn(2+) is bound by residues Cys31, Cys34, Cys50, and Cys53. A C4-type zinc finger spans residues 31-53 (CSACRELIYKKQLNDNLKVCPKC).

This sequence belongs to the AccD/PCCB family. As to quaternary structure, acetyl-CoA carboxylase is a heterohexamer composed of biotin carboxyl carrier protein (AccB), biotin carboxylase (AccC) and two subunits each of ACCase subunit alpha (AccA) and ACCase subunit beta (AccD). Zn(2+) is required as a cofactor.

The protein resides in the cytoplasm. It carries out the reaction N(6)-carboxybiotinyl-L-lysyl-[protein] + acetyl-CoA = N(6)-biotinyl-L-lysyl-[protein] + malonyl-CoA. It participates in lipid metabolism; malonyl-CoA biosynthesis; malonyl-CoA from acetyl-CoA: step 1/1. Its function is as follows. Component of the acetyl coenzyme A carboxylase (ACC) complex. Biotin carboxylase (BC) catalyzes the carboxylation of biotin on its carrier protein (BCCP) and then the CO(2) group is transferred by the transcarboxylase to acetyl-CoA to form malonyl-CoA. In Chloroflexus aggregans (strain MD-66 / DSM 9485), this protein is Acetyl-coenzyme A carboxylase carboxyl transferase subunit beta.